A 253-amino-acid chain; its full sequence is Pre-mRNA-splicing factor SPF27 homolog (253 aa).

The stretch at 124–235 forms a coiled coil; that stretch reads KQYLQKNQRS…IDSFKKEAAE (112 aa).

The protein belongs to the SPF27 family. In terms of assembly, component of the multiprotein assembly MOS4-associated complex (MAC) at least composed of MOS4, CDC5 and PRL1. Interacts with CYCL1-1 and CDC5. Associated with the spliceosome. Interacts with ENY2.

The protein resides in the nucleus. In terms of biological role, component of the MAC complex that probably regulates defense responses through transcriptional control and thereby is essential for plant innate immunity. Involved in mRNA splicing. This Arabidopsis thaliana (Mouse-ear cress) protein is Pre-mRNA-splicing factor SPF27 homolog (MOS4).